The chain runs to 622 residues: Serine/threonine-protein kinase MAK (622 aa).

One can recognise a Protein kinase domain in the interval 4-284 (YTTMKQLGDG…ASQALKHPYF (281 aa)). Residues 10 to 18 (LGDGTYGSV) and K33 contribute to the ATP site. Catalysis depends on D125, which acts as the Proton acceptor. Phosphothreonine; by autocatalysis is present on T157. Y159 is subject to Phosphotyrosine; by autocatalysis. Residues 301–371 (QTLHKQLQPL…QGHQKPPQTM (71 aa)) are disordered. Residues 336 to 355 (QPKQGHQPLQTIQPPQNTVT) are compositionally biased toward polar residues.

This sequence belongs to the protein kinase superfamily. CMGC Ser/Thr protein kinase family. CDC2/CDKX subfamily. In terms of assembly, interacts with AR and CDK20. Found in a complex containing MAK, AR and NCOA3. Interacts with FZR1 (via WD repeats). Interacts with RP1. Mg(2+) serves as cofactor. Post-translationally, autophosphorylated. Phosphorylated on serine and threonine residues. In terms of tissue distribution, in pre- and postmeiotic male germ cells in testis. In photoreceptor cells of the retina and in the olfactory receptors, and in certain epithelia of the respiratory tract and choroid plexus (brain).

It localises to the nucleus. The protein localises to the cytoplasm. It is found in the cytoskeleton. The protein resides in the microtubule organizing center. Its subcellular location is the centrosome. It localises to the spindle. The protein localises to the midbody. It is found in the cell projection. The protein resides in the cilium. Its subcellular location is the photoreceptor outer segment. It localises to the photoreceptor inner segment. The catalysed reaction is L-seryl-[protein] + ATP = O-phospho-L-seryl-[protein] + ADP + H(+). It catalyses the reaction L-threonyl-[protein] + ATP = O-phospho-L-threonyl-[protein] + ADP + H(+). Its function is as follows. Essential for the regulation of ciliary length and required for the long-term survival of photoreceptors. Could have an important function in sensory cells and in spermatogenesis. May participate in signaling pathways used in visual and olfactory sensory transduction. Phosphorylates FZR1 in a cell cycle-dependent manner. Plays a role in the transcriptional coactivation of AR. In Mus musculus (Mouse), this protein is Serine/threonine-protein kinase MAK (Mak).